The primary structure comprises 270 residues: Diaminopimelate epimerase (270 aa).

Substrate-binding residues include Asn15, Gln49, and Asn66. Catalysis depends on Cys75, which acts as the Proton donor. Residues 76–77 (GN), Asn155, Asn187, and 204–205 (ER) contribute to the substrate site. Cys213 serves as the catalytic Proton acceptor. 214–215 (GS) serves as a coordination point for substrate.

Belongs to the diaminopimelate epimerase family. In terms of assembly, homodimer.

The protein localises to the cytoplasm. The catalysed reaction is (2S,6S)-2,6-diaminopimelate = meso-2,6-diaminopimelate. It participates in amino-acid biosynthesis; L-lysine biosynthesis via DAP pathway; DL-2,6-diaminopimelate from LL-2,6-diaminopimelate: step 1/1. Functionally, catalyzes the stereoinversion of LL-2,6-diaminopimelate (L,L-DAP) to meso-diaminopimelate (meso-DAP), a precursor of L-lysine and an essential component of the bacterial peptidoglycan. The protein is Diaminopimelate epimerase of Rickettsia akari (strain Hartford).